The sequence spans 331 residues: Peroxisomal nicotinamide adenine dinucleotide carrier (331 aa).

Solcar repeat units follow at residues 2-91 (SDAL…FRNR), 109-216 (VGMF…MLTK), and 229-320 (VTAL…LVKG). Helical transmembrane passes span 5 to 25 (LINGLAGAGGGIIAQLLTYPL), 63 to 85 (LYGGLAPSLAGTAASQGVYYYFY), 116 to 136 (LVAAFAGSVNVLMTNPIWVIV), 180 to 200 (VYDEAGITGFWKGVIPTLIMV), 235 to 255 (FLLGAVAKLGATVTTYPLLVV), and 293 to 313 (YKGMSTKIVQSVLAAAVLFMI).

The protein belongs to the mitochondrial carrier (TC 2.A.29) family. In terms of assembly, homodimer. As to expression, expressed in cotyledons, hypocotyls, vascular tissues, trichomes, hydathodes, seeds, pedicels, flowers and stigma.

The protein localises to the glyoxysome membrane. Its activity is regulated as follows. Inhibited by pyridoxal 5'-phosphate, bathophenanthroline, tannic acid, mersalyl, mercuric chloride and bromocresol purple. Its function is as follows. Mediates the NAD(+) import into peroxisomes. Favors the NAD(+)(in)/AMP(out) antiport exchange, but is also able to catalyze a low unidirectional transport that might be essential under special conditions. Transports CoA, dephospho-CoA, acetyl-CoA, adenosine 3',5'-diphosphate (PAP), NAD(+), AMP, ADP and NADH, but has no activity with ATP, GTP, GDP, NADPH, NADP(+) or FAD. Required for peroxisomes proliferation. In Arabidopsis thaliana (Mouse-ear cress), this protein is Peroxisomal nicotinamide adenine dinucleotide carrier (PXN).